We begin with the raw amino-acid sequence, 134 residues long: Postmeiotic segregation increased 2-like protein 5 (134 aa).

Belongs to the DNA mismatch repair MutL/HexB family.

This chain is Postmeiotic segregation increased 2-like protein 5 (PMS2P5), found in Homo sapiens (Human).